The primary structure comprises 498 residues: Tryptophan decarboxylase TDC2 (498 aa).

At K316 the chain carries N6-(pyridoxal phosphate)lysine.

This sequence belongs to the group II decarboxylase family. It depends on pyridoxal 5'-phosphate as a cofactor.

The enzyme catalyses L-tryptophan + H(+) = tryptamine + CO2. In terms of biological role, involved in the biosynthesis of tryptamine. Supplies tryptamine for the indole moiety of camptothecin (CPT), an anti-cancer monoterpene alkaloid. Represents a key step in monoterpene indole alkaloid biosynthesis. Is specific for tryptophan, and inactive against tyrosine, phenylalanine and 3,4-dihydroxyphenylalanine (dopa). The sequence is that of Tryptophan decarboxylase TDC2 from Camptotheca acuminata (Happy tree).